The chain runs to 365 residues: Ribosomal RNA large subunit methyltransferase F (365 aa).

The tract at residues 1 to 48 (MSKPAVKSVQSATAKTATRAVNIRQKVKAPKQAKPEGKGSTKPVKDRP) is disordered. The segment covering 33–48 (AKPEGKGSTKPVKDRP) has biased composition (basic and acidic residues).

It belongs to the methyltransferase superfamily. METTL16/RlmF family.

It is found in the cytoplasm. It carries out the reaction adenosine(1618) in 23S rRNA + S-adenosyl-L-methionine = N(6)-methyladenosine(1618) in 23S rRNA + S-adenosyl-L-homocysteine + H(+). Its function is as follows. Specifically methylates the adenine in position 1618 of 23S rRNA. This chain is Ribosomal RNA large subunit methyltransferase F, found in Shewanella baltica (strain OS223).